The primary structure comprises 479 residues: Bifunctional aspartate aminotransferase and glutamate/aspartate-prephenate aminotransferase (479 aa).

The transit peptide at 1 to 79 (MAATTTTSSS…VEVDISLSPR (79 aa)) directs the protein to the chloroplast. Gly111 contacts L-aspartate. 172-173 (AK) lines the pyridoxal 5'-phosphate pocket. The L-aspartate site is built by Trp197 and Asn247. Residues Asn247, Tyr279, and 307–309 (GFS) each bind pyridoxal 5'-phosphate. At Lys310 the chain carries N6-(pyridoxal phosphate)lysine. Arg318 provides a ligand contact to pyridoxal 5'-phosphate. Arg449 is a binding site for L-aspartate.

It belongs to the class-I pyridoxal-phosphate-dependent aminotransferase family. Homodimer. Pyridoxal 5'-phosphate serves as cofactor. In terms of tissue distribution, expressed in flowers, pistils, stamens, ovaries and at lower levels in leaves and sepals.

The protein localises to the plastid. The protein resides in the chloroplast. The enzyme catalyses L-aspartate + 2-oxoglutarate = oxaloacetate + L-glutamate. It catalyses the reaction L-arogenate + oxaloacetate = prephenate + L-aspartate. The catalysed reaction is L-arogenate + 2-oxoglutarate = prephenate + L-glutamate. Its pathway is amino-acid biosynthesis; L-phenylalanine biosynthesis; L-arogenate from prephenate (L-Asp route): step 1/1. The protein operates within amino-acid biosynthesis; L-phenylalanine biosynthesis; L-arogenate from prephenate (L-Glu route): step 1/1. Functionally, prokaryotic-type aspartate aminotransferase. Also has a prenate transaminase activity. Involved in the aromatic amino acids biosynthesis pathway via the arogenate route. Required for the transamination of prephenate into arogenate. Can use 2-oxoglutarate, oxaloacetate and prephenate as substrates, but not phenylpyruvate or 4-hydroxyphenylpyruvate. This is Bifunctional aspartate aminotransferase and glutamate/aspartate-prephenate aminotransferase from Petunia hybrida (Petunia).